Here is a 108-residue protein sequence, read N- to C-terminus: MTNYAIVKASGRQLWFEPGKYYNINYVHANPGDKIIFYKVLLLKNTNSLLIGKPFVEKVEVHATILQHLKDKKITVFKMQAKKGTKKKKGYKTVLTKIKINCIHNHKK.

Belongs to the bacterial ribosomal protein bL21 family. In terms of assembly, part of the 50S ribosomal subunit.

It localises to the plastid. The protein localises to the chloroplast. In terms of biological role, this protein binds to 23S rRNA. In Cyanidium caldarium (Red alga), this protein is Large ribosomal subunit protein bL21c.